The primary structure comprises 142 residues: MKTFMLKKNIARQNWHIFDAKNKILGRFSTKLASILKGKNDITYTPHVDSGNYVIVINSKKIKITGKKLKNKFYYHHTGYSGGIKKISLENMIKNNSELVIYKSVKGMLPKGSLGRVMIKKLKIFSGESHNHEAQKPKKLLT.

This sequence belongs to the universal ribosomal protein uL13 family. As to quaternary structure, part of the 50S ribosomal subunit.

Its function is as follows. This protein is one of the early assembly proteins of the 50S ribosomal subunit, although it is not seen to bind rRNA by itself. It is important during the early stages of 50S assembly. In Wigglesworthia glossinidia brevipalpis, this protein is Large ribosomal subunit protein uL13.